Reading from the N-terminus, the 391-residue chain is Glycerol-3-phosphate dehydrogenase [NAD(+)] (391 aa).

NAD(+)-binding positions include 46-51 (GSGNWG), Phe-78, and Phe-134. A substrate-binding site is contributed by Lys-157. Position 190 (Ala-190) interacts with NAD(+). The Proton acceptor role is filled by Lys-250. NAD(+) contacts are provided by Arg-315 and Gln-344. Substrate is bound at residue 315–316 (RN).

This sequence belongs to the NAD-dependent glycerol-3-phosphate dehydrogenase family.

The catalysed reaction is sn-glycerol 3-phosphate + NAD(+) = dihydroxyacetone phosphate + NADH + H(+). The polypeptide is Glycerol-3-phosphate dehydrogenase [NAD(+)] (GPD) (Candida tropicalis (Yeast)).